A 203-amino-acid polypeptide reads, in one-letter code: Protein GrpE (203 aa).

This sequence belongs to the GrpE family. Homodimer.

It localises to the cytoplasm. Participates actively in the response to hyperosmotic and heat shock by preventing the aggregation of stress-denatured proteins, in association with DnaK and GrpE. It is the nucleotide exchange factor for DnaK and may function as a thermosensor. Unfolded proteins bind initially to DnaJ; upon interaction with the DnaJ-bound protein, DnaK hydrolyzes its bound ATP, resulting in the formation of a stable complex. GrpE releases ADP from DnaK; ATP binding to DnaK triggers the release of the substrate protein, thus completing the reaction cycle. Several rounds of ATP-dependent interactions between DnaJ, DnaK and GrpE are required for fully efficient folding. The polypeptide is Protein GrpE (Pseudoalteromonas translucida (strain TAC 125)).